The sequence spans 472 residues: MATLAADTRDYVVADIGLADFGRKEINIAETEMPGLMALRAEYGASQPLKGARITGSLHMTIQTAVLIETLTALGAEVRWATCNIFSTQNHAAAAIAASGVPVFAVKGESLADYWDYVGRIFDWESDNDGRTANLILDDGGDATMFALWGAKLEAGETMPPPENEEEVEMQRALKAFIAAKPGYLTKTVKAIKGVSEETTTGVHRLYHIAKKGELPFPAINVNDSVTKSKFDNLYGCKESLVDAIRRGTDVMLAGKVATVAGFGDVGKGSAQSLRNGGARVLVTEIDPICALQAAMEGFEVVTMDEAVKRSDIFVTATGNADVITAEHMAAMKNMAIVCNIGHFDSEIQIAALANYKWTEVKPQVDLVEFPDGKQIIILSKGRLVNLGNATGHPSFVMSASFTNQTLAQIELWTRSEQYQNDVYVLPKHLDEKVAALHLEKLGVKLTKLTQKQADYIGVPVEGPFKPDHYRY.

Residues T61, D139, and E198 each contribute to the substrate site. Residue 199–201 (TTT) coordinates NAD(+). Residues K228 and D232 each contribute to the substrate site. NAD(+) is bound by residues N233, 262-267 (GFGDVG), E285, N320, 341-343 (IGH), and N386.

The protein belongs to the adenosylhomocysteinase family. The cofactor is NAD(+).

The protein localises to the cytoplasm. It catalyses the reaction S-adenosyl-L-homocysteine + H2O = L-homocysteine + adenosine. It participates in amino-acid biosynthesis; L-homocysteine biosynthesis; L-homocysteine from S-adenosyl-L-homocysteine: step 1/1. In terms of biological role, may play a key role in the regulation of the intracellular concentration of adenosylhomocysteine. The polypeptide is Adenosylhomocysteinase (Sphingopyxis alaskensis (strain DSM 13593 / LMG 18877 / RB2256) (Sphingomonas alaskensis)).